A 239-amino-acid chain; its full sequence is Homeobox-leucine zipper protein HOX12 (239 aa).

Residues 22–65 (PEAATSGGEQKKARQRRRRKVKPEAAAALAGESGGDEQAKKRRL) form a disordered region. The segment at residues 58 to 117 (EQAKKRRLSDEQARFLEMSFKKERKLETPRKVQLAAELGLDAKQVAVWFQNRRARHKSKL) is a DNA-binding region (homeobox). Residues 107-168 (QNRRARHKSK…KLAAVAAATT (62 aa)) are a coiled coil.

The protein belongs to the HD-ZIP homeobox family. Class I subfamily. Expressed in seedlings, roots, stems, leaf sheaths and panicles.

It is found in the nucleus. Functionally, probable transcription factor. The protein is Homeobox-leucine zipper protein HOX12 (HOX12) of Oryza sativa subsp. indica (Rice).